The following is a 437-amino-acid chain: Coiled-coil domain-containing protein 78 (437 aa).

3 coiled-coil regions span residues 83-114 (HLRE…LHGN), 147-287 (EELK…QRQE), and 360-408 (QRLQ…YKQE).

It belongs to the CCDC78 family.

The protein localises to the cytoplasm. The protein resides in the cytoskeleton. Its subcellular location is the microtubule organizing center. It localises to the centrosome. It is found in the centriole. The protein localises to the perinuclear region. The protein resides in the cell membrane. Its subcellular location is the sarcolemma. It localises to the sarcoplasmic reticulum. Its function is as follows. Component of the deuterosome, a structure that promotes de novo centriole amplification in multiciliated cells that can generate more than 100 centrioles. Deuterosome-mediated centriole amplification occurs in terminally differentiated multiciliated cells (G1/0) and not in S phase. Essential for centriole amplification and is required for CEP152 localization to the deuterosome. The sequence is that of Coiled-coil domain-containing protein 78 (Ccdc78) from Mus musculus (Mouse).